The primary structure comprises 412 residues: 1-deoxy-D-xylulose 5-phosphate reductoisomerase (412 aa).

Threonine 5, glycine 6, serine 7, isoleucine 8, glycine 31, arginine 32, asparagine 33, and asparagine 125 together coordinate NADPH. A 1-deoxy-D-xylulose 5-phosphate-binding site is contributed by lysine 126. Glutamate 127 is a binding site for NADPH. Aspartate 151 serves as a coordination point for Mn(2+). 1-deoxy-D-xylulose 5-phosphate-binding residues include serine 152, glutamate 153, serine 189, and histidine 212. A Mn(2+)-binding site is contributed by glutamate 153. Glycine 218 contributes to the NADPH binding site. Serine 225, asparagine 230, lysine 231, and glutamate 234 together coordinate 1-deoxy-D-xylulose 5-phosphate. Residue glutamate 234 coordinates Mn(2+).

Belongs to the DXR family. It depends on Mg(2+) as a cofactor. Mn(2+) is required as a cofactor.

The enzyme catalyses 2-C-methyl-D-erythritol 4-phosphate + NADP(+) = 1-deoxy-D-xylulose 5-phosphate + NADPH + H(+). Its pathway is isoprenoid biosynthesis; isopentenyl diphosphate biosynthesis via DXP pathway; isopentenyl diphosphate from 1-deoxy-D-xylulose 5-phosphate: step 1/6. Functionally, catalyzes the NADPH-dependent rearrangement and reduction of 1-deoxy-D-xylulose-5-phosphate (DXP) to 2-C-methyl-D-erythritol 4-phosphate (MEP). The protein is 1-deoxy-D-xylulose 5-phosphate reductoisomerase of Prochlorococcus marinus (strain SARG / CCMP1375 / SS120).